Reading from the N-terminus, the 392-residue chain is Tropomodulin (392 aa).

Disordered regions lie at residues 1–30, 59–90, and 118–138; these read MSQA…QLPS, DLNN…GPYK, and QKRG…PENG. The span at 16–29 shows a compositional bias: polar residues; sequence SAPSANSQQGTQLP. 2 stretches are compositionally biased toward basic and acidic residues: residues 76–90 and 122–138; these read RCRD…GPYK and KVYD…PENG.

This sequence belongs to the tropomodulin family. Binds to the N-terminus of actin.

Its subcellular location is the cytoplasm. It localises to the cytoskeleton. Acts as the pointed end capping protein which maintains the length and dynamics of the actin filament. Blocks the elongation and depolymerization of the actin filaments at the pointed end. The polypeptide is Tropomodulin (unc-94) (Caenorhabditis elegans).